We begin with the raw amino-acid sequence, 383 residues long: Dynein axonemal assembly factor 11 (383 aa).

LRR repeat units follow at residues 20-45 (LSNL…ACRE), 46-66 (LEIL…QHLK), 67-89 (YLKY…GCEA), and 90-110 (LERL…ERLR). In terms of domain architecture, LRRCT spans 128–146 (VAGYRAYVVHALPQLRELD). The interval 201 to 244 (KGERLYGHTPEERLQMLREKEEEERRKREEQRERERSSQFGAIR) is disordered. Residues 211–239 (EERLQMLREKEEEERRKREEQRERERSSQ) are a coiled coil.

It belongs to the tilB family.

It is found in the cytoplasm. Its subcellular location is the cytoskeleton. The protein localises to the flagellum basal body. Involved in the regulation of the cell cycle; is required for the basal body replication and new flagellum biogenesis. The chain is Dynein axonemal assembly factor 11 (dnaaf11) from Trypanosoma brucei brucei.